A 314-amino-acid polypeptide reads, in one-letter code: DegV domain-containing protein XCC3382 (314 aa).

Residues 3–307 (IGIVVDSACD…KGALAVAFAA (305 aa)) form the DegV domain. Positions 63 and 96 each coordinate hexadecanoate.

Functionally, may bind long-chain fatty acids, such as palmitate, and may play a role in lipid transport or fatty acid metabolism. This is DegV domain-containing protein XCC3382 from Xanthomonas campestris pv. campestris (strain ATCC 33913 / DSM 3586 / NCPPB 528 / LMG 568 / P 25).